The sequence spans 531 residues: ATP synthase subunit beta (531 aa).

The interval 1–48 (MVKAVTSSKETAKVEKKKSAPRSGVKKAVSKSQAGVKDSSSPVHKSSK) is disordered. Positions 19–29 (SAPRSGVKKAV) are enriched in basic residues. The segment covering 30-44 (SKSQAGVKDSSSPVH) has biased composition (polar residues). 203-210 (GGAGVGKT) lines the ATP pocket.

Belongs to the ATPase alpha/beta chains family. In terms of assembly, F-type ATPases have 2 components, CF(1) - the catalytic core - and CF(0) - the membrane proton channel. CF(1) has five subunits: alpha(3), beta(3), gamma(1), delta(1), epsilon(1). CF(0) has three main subunits: a(1), b(2) and c(9-12). The alpha and beta chains form an alternating ring which encloses part of the gamma chain. CF(1) is attached to CF(0) by a central stalk formed by the gamma and epsilon chains, while a peripheral stalk is formed by the delta and b chains.

It localises to the cell inner membrane. The enzyme catalyses ATP + H2O + 4 H(+)(in) = ADP + phosphate + 5 H(+)(out). Produces ATP from ADP in the presence of a proton gradient across the membrane. The catalytic sites are hosted primarily by the beta subunits. The protein is ATP synthase subunit beta of Bartonella henselae (strain ATCC 49882 / DSM 28221 / CCUG 30454 / Houston 1) (Rochalimaea henselae).